A 298-amino-acid chain; its full sequence is UDP-N-acetylenolpyruvoylglucosamine reductase (298 aa).

The FAD-binding PCMH-type domain occupies 26 to 191 (KTGGAADVFV…LDATFSLALE (166 aa)). R170 is an active-site residue. The Proton donor role is filled by S220. E290 is a catalytic residue.

This sequence belongs to the MurB family. FAD serves as cofactor.

The protein resides in the cytoplasm. The enzyme catalyses UDP-N-acetyl-alpha-D-muramate + NADP(+) = UDP-N-acetyl-3-O-(1-carboxyvinyl)-alpha-D-glucosamine + NADPH + H(+). Its pathway is cell wall biogenesis; peptidoglycan biosynthesis. Its function is as follows. Cell wall formation. This chain is UDP-N-acetylenolpyruvoylglucosamine reductase, found in Listeria monocytogenes serotype 4b (strain CLIP80459).